We begin with the raw amino-acid sequence, 147 residues long: Hemoglobin subunit epsilon (147 aa).

In terms of domain architecture, Globin spans 3 to 147; the sequence is HFTAEEKSTI…VATALAHKYH (145 aa). Phosphoserine is present on residues Ser14 and Ser51. The heme b site is built by His64 and His93.

Belongs to the globin family. As to quaternary structure, heterotetramer of two alpha chains and two epsilon chains in early embryonic hemoglobin Gower-2; two zeta chains and two epsilon chains in early embryonic hemoglobin Gower-1. As to expression, red blood cells.

The epsilon chain is a beta-type chain of early mammalian embryonic hemoglobin. In Cheirogaleus medius (Fat-tailed dwarf lemur), this protein is Hemoglobin subunit epsilon (HBE1).